Reading from the N-terminus, the 252-residue chain is tRNA (guanine-N(1)-)-methyltransferase (252 aa).

Residues Gly-110 and 130 to 135 (VGDFVL) contribute to the S-adenosyl-L-methionine site.

The protein belongs to the RNA methyltransferase TrmD family. Homodimer.

The protein resides in the cytoplasm. The catalysed reaction is guanosine(37) in tRNA + S-adenosyl-L-methionine = N(1)-methylguanosine(37) in tRNA + S-adenosyl-L-homocysteine + H(+). Functionally, specifically methylates guanosine-37 in various tRNAs. The protein is tRNA (guanine-N(1)-)-methyltransferase of Magnetococcus marinus (strain ATCC BAA-1437 / JCM 17883 / MC-1).